Here is an 881-residue protein sequence, read N- to C-terminus: Mechanosensitive ion channel protein 5 (881 aa).

2 stretches are compositionally biased toward basic and acidic residues: residues 1–12 (MAAVDSTDRRDF) and 48–59 (DGEKGKNDKKGD). The disordered stretch occupies residues 1-248 (MAAVDSTDRR…RNGFEEEEEE (248 aa)). Residues 115 to 145 (ELQSNTPPRPATASNTPRRGLTTISESSSPV) show a composition bias toward polar residues. Residues 169–179 (EEGRNRDEAEV) are compositionally biased toward basic and acidic residues. S231 carries the post-translational modification Phosphoserine. 6 helical membrane-spanning segments follow: residues 265 to 285 (LSFW…SLVC), 309 to 329 (VLVL…IVFL), 349 to 369 (KSVQ…FLFD), 387 to 407 (VLVC…LVKV), 642 to 662 (IINV…LGIA), and 677 to 697 (VAFV…FLFV). Residues 861 to 881 (PTANPTSSDRIPPSWMQQRGP) are disordered. Polar residues predominate over residues 864 to 881 (NPTSSDRIPPSWMQQRGP).

It belongs to the MscS (TC 1.A.23) family.

The protein resides in the membrane. Mechanosensitive channel that opens in response to stretch forces in the membrane lipid bilayer. The polypeptide is Mechanosensitive ion channel protein 5 (MSL5) (Arabidopsis thaliana (Mouse-ear cress)).